The chain runs to 235 residues: Glycerol-3-phosphate acyltransferase (235 aa).

The next 6 helical transmembrane spans lie at 4 to 24 (LLAI…IMAG), 56 to 76 (SVTL…VAFF), 94 to 114 (LLAG…GFKG), 125 to 145 (LIGI…LTVW), 152 to 172 (VASI…KYVF), and 191 to 211 (FHDS…LAIL).

It belongs to the PlsY family. In terms of assembly, probably interacts with PlsX.

It localises to the cell inner membrane. The enzyme catalyses an acyl phosphate + sn-glycerol 3-phosphate = a 1-acyl-sn-glycero-3-phosphate + phosphate. It participates in lipid metabolism; phospholipid metabolism. In terms of biological role, catalyzes the transfer of an acyl group from acyl-phosphate (acyl-PO(4)) to glycerol-3-phosphate (G3P) to form lysophosphatidic acid (LPA). This enzyme utilizes acyl-phosphate as fatty acyl donor, but not acyl-CoA or acyl-ACP. This chain is Glycerol-3-phosphate acyltransferase, found in Chlorobium luteolum (strain DSM 273 / BCRC 81028 / 2530) (Pelodictyon luteolum).